Here is a 469-residue protein sequence, read N- to C-terminus: Cysteine--tRNA ligase (469 aa).

Residue cysteine 33 coordinates Zn(2+). The 'HIGH' region motif lies at 35–45 (PTVYNLLHIGN). 3 residues coordinate Zn(2+): cysteine 214, histidine 239, and glutamate 243. The 'KMSKS' region motif lies at 271–275 (KMSKS). An ATP-binding site is contributed by lysine 274.

It belongs to the class-I aminoacyl-tRNA synthetase family. As to quaternary structure, monomer. The cofactor is Zn(2+).

It is found in the cytoplasm. It carries out the reaction tRNA(Cys) + L-cysteine + ATP = L-cysteinyl-tRNA(Cys) + AMP + diphosphate. In Petrotoga mobilis (strain DSM 10674 / SJ95), this protein is Cysteine--tRNA ligase.